Consider the following 321-residue polypeptide: Ferredoxin--NADP reductase (321 aa).

Glu33, Gln41, Tyr46, Val86, Leu119, Asp277, and Ser318 together coordinate FAD.

This sequence belongs to the ferredoxin--NADP reductase type 2 family. In terms of assembly, homodimer. It depends on FAD as a cofactor.

The enzyme catalyses 2 reduced [2Fe-2S]-[ferredoxin] + NADP(+) + H(+) = 2 oxidized [2Fe-2S]-[ferredoxin] + NADPH. This chain is Ferredoxin--NADP reductase, found in Lactococcus lactis subsp. cremoris (strain SK11).